Here is a 380-residue protein sequence, read N- to C-terminus: Glutamyl-tRNA reductase 1 (380 aa).

Substrate-binding positions include 42 to 45 (TCNR), serine 93, 98 to 100 (ETD), and glutamine 104. Cysteine 43 acts as the Nucleophile in catalysis. 172–177 (GAGAVG) contributes to the NADP(+) binding site.

Belongs to the glutamyl-tRNA reductase family. In terms of assembly, homodimer.

It catalyses the reaction (S)-4-amino-5-oxopentanoate + tRNA(Glu) + NADP(+) = L-glutamyl-tRNA(Glu) + NADPH + H(+). The protein operates within porphyrin-containing compound metabolism; protoporphyrin-IX biosynthesis; 5-aminolevulinate from L-glutamyl-tRNA(Glu): step 1/2. Catalyzes the NADPH-dependent reduction of glutamyl-tRNA(Glu) to glutamate 1-semialdehyde (GSA). This chain is Glutamyl-tRNA reductase 1, found in Pyrobaculum calidifontis (strain DSM 21063 / JCM 11548 / VA1).